The sequence spans 591 residues: MKRTNYAGRTSEEQIGQEVVVKGWVAKRRNLGGLIFIDLWDREGIVQLVFNEEEDQAAFEVANQARNQYILEARGLVRARAEVNPDIATGKIEIEVKEAKILAKSQTPPFEVQDDVDASEDLRLKYRYVDLRRPKMMNYLKLRSKVTSIVHNYFDNNDFLDVETPELTRSTPEGARDYIVPSRVYPGHFYALPQSPQLFKQLLMAAGVDKYYQIAKCFRDEDLRGDRQPEFTQIDTEMSFAEPEEIQAMAEGLIKRVMKEAVGVDVPTPFPRMEWQEAMDKYGSDKPDTRFDMLIQDVSDLVKDSSFKVFSATVADGNFVRAIVVPGGADKYSRKDITKKEDYIKRYGAKGLAWVKVTEEGYNGPVAKFLNDDANALNERLSAKVGDLVLFVAGSFHVVCDSLGYLRESIAKELDLIDENKFNYLWVINWPMFEYDEGFGKWIAAHHPFTMLNEDDLKYLEEGEDPHQAHAQSYDIVLNGNEIGGGSIRIHDPEVQEKVFKALGYTKEAAQARFGFLIKALENGMPPEGGMAFGLDRWVMLLAHADSIRDVIAFPKNSKAVEPLTAAPGTVDDEQLEVLHLNVEEAPKEAE.

An L-aspartate-binding site is contributed by E173. Positions 197 to 200 (QLFK) are aspartate. Position 219 (R219) interacts with L-aspartate. Residues 219-221 (RDE) and Q228 each bind ATP. L-aspartate is bound at residue H446. E482 serves as a coordination point for ATP. R489 is a binding site for L-aspartate. 534-537 (GLDR) is an ATP binding site.

It belongs to the class-II aminoacyl-tRNA synthetase family. Type 1 subfamily. Homodimer.

The protein resides in the cytoplasm. The catalysed reaction is tRNA(Asp) + L-aspartate + ATP = L-aspartyl-tRNA(Asp) + AMP + diphosphate. Its function is as follows. Catalyzes the attachment of L-aspartate to tRNA(Asp) in a two-step reaction: L-aspartate is first activated by ATP to form Asp-AMP and then transferred to the acceptor end of tRNA(Asp). This chain is Aspartate--tRNA ligase, found in Limosilactobacillus fermentum (strain NBRC 3956 / LMG 18251) (Lactobacillus fermentum).